Consider the following 66-residue polypeptide: U-scoloptoxin(04)-Ssd2a (66 aa).

The N-terminal stretch at 1-19 (MKAIYILSVLLLMMLPILS) is a signal peptide.

This sequence belongs to the scoloptoxin-04 family. Contains 2 disulfide bonds. As to expression, expressed by the venom gland.

It is found in the secreted. The chain is U-scoloptoxin(04)-Ssd2a from Scolopendra dehaani (Thai centipede).